We begin with the raw amino-acid sequence, 468 residues long: uncharacterized protein (468 aa).

Coiled-coil stretches lie at residues 10-94 (NEAL…VKEL) and 147-279 (FVEL…EASI). The interval 324 to 369 (TPRTVDPIPEGTIIKKESSDDAMFSGLKKSKPKKSNKSNNNQADSD) is disordered. Ser-342 carries the post-translational modification Phosphoserine. A coiled-coil region spans residues 399–445 (VEQLKSRIAHFKEQQDSVTKQRIEKAKQEIEKLEAKYNSKEEKTLTE).

The protein localises to the cytoplasm. This is an uncharacterized protein from Schizosaccharomyces pombe (strain 972 / ATCC 24843) (Fission yeast).